The sequence spans 624 residues: Anti-CBASS protein Acb1 (624 aa).

Tyr106 serves as a coordination point for 3',3'-cGAMP. Tyr106 serves as a coordination point for 3',3'-cUAMP. Catalysis depends on residues His503, Thr505, His581, and Thr583. Trp617 provides a ligand contact to 3',3'-cGAMP. Trp617 provides a ligand contact to 3',3'-cUAMP.

The protein belongs to the anti-CBASS protein Acb1 family.

The catalysed reaction is 3',3'-cUAMP + H2O = U[3'-5']pAp[3'] + H(+). It catalyses the reaction 3',3',3'-c-tri-AMP + H2O = A[3'-5']pA[3'-5']pAp[3'] + H(+). The enzyme catalyses 3',3',3'-cAAG + H2O = G[3'-5']pA[3'-5']pAp[3'] + H(+). It carries out the reaction 3',3',3'-cAAG + H2O = A[3'-5']pG[3'-5']pAp[3'] + H(+). The catalysed reaction is 3',3'-cGAMP + H2O = G[3'-5']pAp[3'] + H(+). Functionally, counteracts or regulates the endogenous CBASS antiviral defense system. Phosphodiesterase that enables metal-independent hydrolysis of the host cyclic di- and trinucleotide CBASS signals such as 3'3'-cGAMP, 3'3'cUA, and 3'3'3'-cAAA. The protein is Anti-CBASS protein Acb1 of Sphingomonas paeninsulae.